Here is a 314-residue protein sequence, read N- to C-terminus: Ribosome production factor 2 homolog (314 aa).

In terms of domain architecture, Brix spans lysine 28 to serine 238. The disordered stretch occupies residues serine 238–glutamate 314. Basic and acidic residues-rich tracts occupy residues leucine 239–aspartate 249 and glutamine 275–glutamate 314.

The protein belongs to the RPF2 family.

Its subcellular location is the nucleus. It is found in the nucleolus. The protein is Ribosome production factor 2 homolog of Arabidopsis thaliana (Mouse-ear cress).